Reading from the N-terminus, the 147-residue chain is Nucleoside diphosphate kinase (147 aa).

ATP-binding residues include Lys-9, Phe-57, Arg-85, Thr-91, Arg-102, and Asn-112. His-115 functions as the Pros-phosphohistidine intermediate in the catalytic mechanism.

Belongs to the NDK family. As to quaternary structure, homotetramer. The cofactor is Mg(2+).

The protein resides in the cytoplasm. The enzyme catalyses a 2'-deoxyribonucleoside 5'-diphosphate + ATP = a 2'-deoxyribonucleoside 5'-triphosphate + ADP. It catalyses the reaction a ribonucleoside 5'-diphosphate + ATP = a ribonucleoside 5'-triphosphate + ADP. Its function is as follows. Major role in the synthesis of nucleoside triphosphates other than ATP. The ATP gamma phosphate is transferred to the NDP beta phosphate via a ping-pong mechanism, using a phosphorylated active-site intermediate. In Listeria monocytogenes serotype 4b (strain CLIP80459), this protein is Nucleoside diphosphate kinase.